A 671-amino-acid polypeptide reads, in one-letter code: MERVNHTDFERIQQLRAELVAANNAYYREDSPTLSDAEYDARLRELRTLEDRNPQWQSADSPTQRVGAAPVEVFGEVHYAIPLTSLDNVFDQDGFSDWLARVQKGLGREDVPLSAEPKFDGLSVNIRYIEGKLVQAGTRGDGQTGEDVTANVRTIRNVPLQLTGKDWPELLEVRGEVVIPVAAFRRLNGERLRAGDNPFANPRNAAAGSLRQLDSSVTAKRPLAYFPWGWGESSVPLGKSHIAVMERLSAWGFEVTSYLRGVHELTECQRYFSEMQKIREGMPFEIDGLVFKVDDLLAREQLGFTARAPRWAIAYKFPAHEERTVVEDILASVGRTGVITPVAVLKPVQVGGVTVSRASLHNQDEVDRKDIRVGDTVLVRRAGDVIPEVVMVIKEERPPATQPWHMPQRCPVCGSEVLRLANESAHRCMGGLYCPAQRMGAIRHFASRRAMDIRGLGEKLVEQLVGHGLVHTVADIYHLDEAALCGLERMASRSAQKLLAEIDRSRHTSLPRFLYALGIRQVGEGTAKSLAIYFGDLDPLMAATPELLQNIPDVGPIVAESVAHFFAQPHNRDVIAALRAAGVQWAVVQPQKGGRFQGMTLVLTGALDNMTREEAKTAIENAGGKVSGSVSAKTSYVVVGKDPGSKAEKAAKLGVKQLTEAQFLAMFSEKE.

NAD(+) contacts are provided by residues 36 to 40, 85 to 86, and Glu116; these read DAEYD and SL. Catalysis depends on Lys118, which acts as the N6-AMP-lysine intermediate. Arg139, Glu176, Lys292, and Lys316 together coordinate NAD(+). 4 residues coordinate Zn(2+): Cys410, Cys413, Cys428, and Cys434. One can recognise a BRCT domain in the interval 591-671; that stretch reads QKGGRFQGMT…QFLAMFSEKE (81 aa).

The protein belongs to the NAD-dependent DNA ligase family. LigA subfamily. Requires Mg(2+) as cofactor. The cofactor is Mn(2+).

It carries out the reaction NAD(+) + (deoxyribonucleotide)n-3'-hydroxyl + 5'-phospho-(deoxyribonucleotide)m = (deoxyribonucleotide)n+m + AMP + beta-nicotinamide D-nucleotide.. In terms of biological role, DNA ligase that catalyzes the formation of phosphodiester linkages between 5'-phosphoryl and 3'-hydroxyl groups in double-stranded DNA using NAD as a coenzyme and as the energy source for the reaction. It is essential for DNA replication and repair of damaged DNA. The sequence is that of DNA ligase from Acidithiobacillus ferrooxidans (strain ATCC 23270 / DSM 14882 / CIP 104768 / NCIMB 8455) (Ferrobacillus ferrooxidans (strain ATCC 23270)).